Reading from the N-terminus, the 1012-residue chain is Probable inorganic carbon transporter subunit DabA (1012 aa).

C489, D491, H679, and C694 together coordinate Zn(2+).

It belongs to the inorganic carbon transporter (TC 9.A.2) DabA family. As to quaternary structure, forms a complex with DabB. The cofactor is Zn(2+).

It is found in the cell inner membrane. Functionally, part of an energy-coupled inorganic carbon pump. This Dechloromonas aromatica (strain RCB) protein is Probable inorganic carbon transporter subunit DabA.